Consider the following 125-residue polypeptide: Kappa-casein (125 aa).

The interval 42–63 (LPNIDPPTVERRPRPRPSFIAI) is disordered. Threonine 97 carries an O-linked (GalNAc...) threonine glycan. Serine 104 carries the phosphoserine; alternate modification. Serine 104 is a glycosylation site (O-linked (GalNAc...) serine; alternate). Threonine 121 carries O-linked (GalNAc...) threonine glycosylation. At serine 122 the chain carries Phosphoserine.

The protein belongs to the kappa-casein family. Mammary gland specific. Secreted in milk.

It localises to the secreted. In terms of biological role, kappa-casein stabilizes micelle formation, preventing casein precipitation in milk. The sequence is that of Kappa-casein (CSN3) from Lama guanicoe (Guanaco).